Reading from the N-terminus, the 343-residue chain is Phenylalanine--tRNA ligase alpha subunit (343 aa).

Glu-258 is a Mg(2+) binding site.

This sequence belongs to the class-II aminoacyl-tRNA synthetase family. Phe-tRNA synthetase alpha subunit type 1 subfamily. As to quaternary structure, tetramer of two alpha and two beta subunits. Mg(2+) serves as cofactor.

It is found in the cytoplasm. The enzyme catalyses tRNA(Phe) + L-phenylalanine + ATP = L-phenylalanyl-tRNA(Phe) + AMP + diphosphate + H(+). The sequence is that of Phenylalanine--tRNA ligase alpha subunit from Symbiobacterium thermophilum (strain DSM 24528 / JCM 14929 / IAM 14863 / T).